Consider the following 484-residue polypeptide: Perphorin-2 (484 aa).

N-linked (GlcNAc...) asparagine glycans are attached at residues Asn-16, Asn-240, Asn-256, Asn-265, Asn-326, Asn-330, Asn-356, and Asn-411.

The protein localises to the secreted. The protein resides in the extracellular space. Its subcellular location is the extracellular matrix. May be involved in conversion of asexual males and females to the sexual pathway. The chain is Perphorin-2 from Volvox carteri (Green alga).